Consider the following 188-residue polypeptide: Small ribosomal subunit protein uS12m (188 aa).

The N-terminal 63 residues, 1-63 (MSGGRWISNL…AAFRLPQSSG (63 aa)), are a transit peptide targeting the mitochondrion.

Belongs to the universal ribosomal protein uS12 family.

It localises to the mitochondrion. Protein S12 is involved in the translation initiation step. This Oenothera elata subsp. hookeri (Hooker's evening primrose) protein is Small ribosomal subunit protein uS12m (RPS12).